Reading from the N-terminus, the 393-residue chain is Methylthioribose kinase (393 aa).

ATP-binding positions include Asn38, Lys53, and Glu107–Leu109. Asp225 contributes to the substrate binding site. Residue Asp242–Glu244 coordinates ATP. Arg332 provides a ligand contact to substrate.

The protein belongs to the methylthioribose kinase family. Homodimer.

It carries out the reaction 5-(methylsulfanyl)-D-ribose + ATP = 5-(methylsulfanyl)-alpha-D-ribose 1-phosphate + ADP + H(+). Its pathway is amino-acid biosynthesis; L-methionine biosynthesis via salvage pathway; S-methyl-5-thio-alpha-D-ribose 1-phosphate from S-methyl-5'-thioadenosine (hydrolase route): step 2/2. In terms of biological role, catalyzes the phosphorylation of methylthioribose into methylthioribose-1-phosphate. The sequence is that of Methylthioribose kinase from Bacillus cereus (strain ATCC 10987 / NRS 248).